A 502-amino-acid polypeptide reads, in one-letter code: High affinity nitrate transporter 2.5 (502 aa).

Transmembrane regions (helical) follow at residues 51-71 (WFQFFCCFVSTFAAPPLLPVI), 87-107 (IASVSGAVFARIVMGTACDLF), 111-131 (LASAALTLSTAPAVYFTAGIK), 133-153 (PIGFIMVRFFAGFSLATFVST), 172-192 (IAAGWGNLGGGATQLIMPIVF), 208-228 (IAFFIPGLFQTLSAFAVLLFG), 264-284 (WITALAYGYCFGVELTIDNII), 300-320 (GIIAASFGLANFFARPGGGIF), 334-354 (LWAWWIVQTSGGVLCACLGQI), 361-381 (IIVMLVFSVFVQAACGLTFGV), 393-413 (VSGMTGAGGNVGAVLTQLIFF), and 423-443 (GITLMGVMSIACSLPICLIYF). The interval 477 to 502 (LHIGSQKFAETSISERGRATTTHPQT) is disordered.

It belongs to the major facilitator superfamily. Nitrate/nitrite porter (TC 2.A.1.8) family. In terms of assembly, oligomeric molecular complex with NRT3.1. In terms of tissue distribution, expressed in roots, shoots and seeds. Expressed in leaves. Expressed in root hair zone of the primary root and the lateral roots, but not in the lateral root tip or in older parts of the roots. Detected mainly in the epidermis and the cortex. Expressed in shoots only in higher-order veins.

It localises to the cell membrane. In terms of biological role, nitrate transporter involved in the constitutive high-affinity transport system (cHATS) under long-term N starvation conditions. Predominantly expressed in roots of nitrate-deprived plants as a 150 kDa molecular complex with NRT3.1 representing the major contributor to cHATS influx. The principal role of this cHATS is to enable roots previously deprived of nitrate to absorb this ion and initiate induction of nitrate-inducible genes. Not involved in transfer of nitrate from roots to shoots. Contributes to phloem loading of nitrate in shoots during N starvation, but not required for growth and nitrate uptake in young plants. Required for the nitrate uptake-independent plant growth promotion and lateral root response to the rhizospheric Phyllobacterium. Might be involved in the transfer of nitrate from stored pools to cytoplasm. The protein is High affinity nitrate transporter 2.5 (NRT2.5) of Arabidopsis thaliana (Mouse-ear cress).